We begin with the raw amino-acid sequence, 101 residues long: Small ribosomal subunit protein uS14 (101 aa).

The protein belongs to the universal ribosomal protein uS14 family. As to quaternary structure, part of the 30S ribosomal subunit. Contacts proteins S3 and S10.

In terms of biological role, binds 16S rRNA, required for the assembly of 30S particles and may also be responsible for determining the conformation of the 16S rRNA at the A site. This chain is Small ribosomal subunit protein uS14, found in Methylibium petroleiphilum (strain ATCC BAA-1232 / LMG 22953 / PM1).